We begin with the raw amino-acid sequence, 144 residues long: Globin (144 aa).

Position 1 is an N-acetylalanine (Ala-1). The Globin domain maps to 1 to 144 (ALSAADAGLL…IISALQSAGK (144 aa)). His-95 lines the heme b pocket.

It belongs to the globin family. As to quaternary structure, monomer.

The protein is Globin of Aplysia juliana (Walking sea hare).